The following is a 267-amino-acid chain: Dichloromethane dehalogenase (267 aa).

The region spanning Thr-3 to Ser-85 is the GST N-terminal domain. Residues Thr-91 to Tyr-224 form the GST C-terminal domain.

It belongs to the GST superfamily. In terms of assembly, homohexamer.

The protein localises to the cytoplasm. It catalyses the reaction dichloromethane + H2O = formaldehyde + 2 chloride + 2 H(+). It functions in the pathway xenobiotic degradation; dichloromethane degradation. This chain is Dichloromethane dehalogenase (dcmA), found in Methylophilus leisingeri (strain DSM 6813 / VKM B-2013 / DM11).